The following is a 362-amino-acid chain: Ferrochelatase (362 aa).

2 residues coordinate Fe cation: His212 and Glu294.

This sequence belongs to the ferrochelatase family.

The protein localises to the cytoplasm. The enzyme catalyses heme b + 2 H(+) = protoporphyrin IX + Fe(2+). It functions in the pathway porphyrin-containing compound metabolism; protoheme biosynthesis; protoheme from protoporphyrin-IX: step 1/1. Catalyzes the ferrous insertion into protoporphyrin IX. In Leptospira biflexa, this protein is Ferrochelatase.